Consider the following 1426-residue polypeptide: Nephrocystin-4 (1426 aa).

Phosphoserine is present on serine 142. Disordered stretches follow at residues 450–536 (GSEE…SPAQ) and 896–935 (RQGK…GRRG). Over residues 474-486 (KPPTSPSSPPAPV) the composition is skewed to pro residues. The segment covering 503 to 536 (SISQLAASPRSPTQHCLARPTSQLPHGSQASPAQ) has biased composition (polar residues). The interval 823 to 1426 (LTLANVGHPC…EAFCVKVIYQ (604 aa)) is sufficient for basal bodies localization.

Belongs to the NPHP4 family. Interacts with NPHP1. Interacts with NPHP1 and RPGRIP1L/NPHP8; NPHP1, NPHP4 and RPGRIP1L are proposed to form a functional NPHP1-4-8 module localized to cell-cell contacts and the ciliary transition zone; NPHP4 mediates the interaction between NPHP1 and RPGRIP1L. Interacts with IQCB1/NPHP5; the interaction likely requires additional interactors. Interacts with RPGRIP1, CEP164, JADE1, PALS1, INADL, PARD6A, INVS, DVL2, LATS1. Interacts with INTU; INTU mediates the interaction between NPHP4 and DAAM1. Interacts with SPATA7. As to expression, expressed in kidney, skeletal muscle, heart and liver, and to a lesser extent in brain and lung.

It localises to the cytoplasm. The protein localises to the cytoskeleton. The protein resides in the cilium basal body. Its subcellular location is the microtubule organizing center. It is found in the centrosome. It localises to the cell junction. The protein localises to the tight junction. The protein resides in the nucleus. Involved in the organization of apical junctions; the function is proposed to implicate a NPHP1-4-8 module. Does not seem to be strictly required for ciliogenesis. Required for building functional cilia. Involved in the organization of the subapical actin network in multiciliated epithelial cells. Seems to recruit INT to basal bodies of motile cilia which subsequently interacts with actin-modifying proteins such as DAAM1. In cooperation with INVS may down-regulate the canonical Wnt pathway and promote the Wnt-PCP pathway by regulating expression and subcellular location of disheveled proteins. Stabilizes protein levels of JADE1 and promotes its translocation to the nucleus leading to cooperative inhibition of canonical Wnt signaling. Acts as a negative regulator of the hippo pathway by association with LATS1 and modifying LATS1-dependent phosphorylation and localization of WWTR1/TAZ. The chain is Nephrocystin-4 (NPHP4) from Homo sapiens (Human).